Here is a 102-residue protein sequence, read N- to C-terminus: EPIDERMAL PATTERNING FACTOR-like protein 9 (102 aa).

An N-terminal signal peptide occupies residues 1 to 31 (MKHEMMNIKPRCITIFFLLFALLLGNYVVQA). 3 disulfides stabilise this stretch: cysteine 65-cysteine 98, cysteine 70-cysteine 77, and cysteine 73-cysteine 100.

This sequence belongs to the plant cysteine rich small secretory peptide family. Epidermal patterning factor subfamily. In terms of assembly, interacts with ERECTA and TMM. In terms of tissue distribution, expressed in immature organs, including leaves, stems and flower buds, but not in roots, shoot apical meristem and petals. Detected in the mesophyll tissues but not in the epidermal tissues where stomata develop.

Its subcellular location is the secreted. It is found in the extracellular space. The protein resides in the apoplast. Its function is as follows. Positively regulates stomatal density and patterning. Acts by competing with EPF2 (AC Q8LC53) for the same receptors, ERECTA (AC Q42371) and TMM (AC Q9SSD1). Not cleaved by the protease CRSP (AC Q9LNU1). In Arabidopsis thaliana (Mouse-ear cress), this protein is EPIDERMAL PATTERNING FACTOR-like protein 9.